The following is a 350-amino-acid chain: 2,5-dihydroxypyridine 5,6-dioxygenase (350 aa).

3 residues coordinate Fe cation: His-265, His-318, and Asp-320.

Fe(2+) is required as a cofactor.

The enzyme catalyses 2,5-dihydroxypyridine + O2 = N-formylmaleamate + H(+). The protein operates within cofactor degradation; nicotinate degradation. Catalyzes the dioxygenolytic ring cleavage of 2,5-dihydroxypyridine between carbons 5 and 6 generating N-formylmaleamate in the aerobic nicotinate degradation pathway. This chain is 2,5-dihydroxypyridine 5,6-dioxygenase (nicX), found in Pseudomonas putida (strain ATCC 47054 / DSM 6125 / CFBP 8728 / NCIMB 11950 / KT2440).